A 168-amino-acid chain; its full sequence is WAP four-disulfide core domain protein 2 (168 aa).

The signal sequence occupies residues 1–30 (MPACRLCLLATGLLLGLLLFTPLSATGTRA). 2 WAP domains span residues 31–74 (EKPG…SKPN) and 119–167 (NGEK…TTPK). 4 cysteine pairs are disulfide-bonded: Cys36-Cys62, Cys45-Cys66, Cys49-Cys61, and Cys55-Cys70. The disordered stretch occupies residues 100 to 123 (PLSRGQVSTKPPVVTKEGGNGEKQ). 4 disulfides stabilise this stretch: Cys126–Cys154, Cys137–Cys158, Cys141–Cys153, and Cys147–Cys163.

As to quaternary structure, homotrimer; disulfide-linked.

The protein resides in the secreted. Functionally, broad range protease inhibitor. This is WAP four-disulfide core domain protein 2 (Wfdc2) from Rattus norvegicus (Rat).